A 157-amino-acid chain; its full sequence is MEKVSYYTEEGLQRLKGELTQLKSEGRAKVAEQLSEARDKGDLSENAEYDAAKEAQEILERRIAKLEELMINARVINKDNINTSAVSILSKVKIKNKKLGKVSTYTMVSEEEADLKEGKISIESPIGKGLLGKKAGEVAIVEAPAGKIEFEILDISF.

Positions 25–43 (EGRAKVAEQLSEARDKGDL) are enriched in basic and acidic residues. The tract at residues 25-47 (EGRAKVAEQLSEARDKGDLSENA) is disordered. Residues 43–79 (LSENAEYDAAKEAQEILERRIAKLEELMINARVINKD) adopt a coiled-coil conformation.

The protein belongs to the GreA/GreB family.

Functionally, necessary for efficient RNA polymerase transcription elongation past template-encoded arresting sites. The arresting sites in DNA have the property of trapping a certain fraction of elongating RNA polymerases that pass through, resulting in locked ternary complexes. Cleavage of the nascent transcript by cleavage factors such as GreA or GreB allows the resumption of elongation from the new 3'terminus. GreA releases sequences of 2 to 3 nucleotides. This Amoebophilus asiaticus (strain 5a2) protein is Transcription elongation factor GreA.